Here is a 276-residue protein sequence, read N- to C-terminus: Large ribosomal subunit protein uL2 (276 aa).

The tract at residues 223–276 (AVMNPVDHPHGGGEGKNSVGRKSPLTPWGKPALGIKTRGRKTSDKFIVRRRNEK) is disordered. The span at 263 to 276 (KTSDKFIVRRRNEK) shows a compositional bias: basic and acidic residues.

It belongs to the universal ribosomal protein uL2 family. As to quaternary structure, part of the 50S ribosomal subunit. Forms a bridge to the 30S subunit in the 70S ribosome.

One of the primary rRNA binding proteins. Required for association of the 30S and 50S subunits to form the 70S ribosome, for tRNA binding and peptide bond formation. It has been suggested to have peptidyltransferase activity; this is somewhat controversial. Makes several contacts with the 16S rRNA in the 70S ribosome. This is Large ribosomal subunit protein uL2 from Fusobacterium nucleatum subsp. nucleatum (strain ATCC 25586 / DSM 15643 / BCRC 10681 / CIP 101130 / JCM 8532 / KCTC 2640 / LMG 13131 / VPI 4355).